The sequence spans 467 residues: Nuclear distribution protein PAC1 (467 aa).

Residues 62–96 are a coiled coil; sequence GSIIRLQRAITKLEQKCDALQQELDDKTKQLETIV. WD repeat units follow at residues 121–160, 164–212, 219–262, 264–302, 325–365, 385–424, and 426–466; these read QNES…IPLA, AHSK…GELK, AHDS…QSFS, HSEW…SVGT, PYRD…LKPN, GHTS…KTWS, and IHNN…VKII.

Belongs to the WD repeat LIS1/nudF family. As to quaternary structure, self-associates. Interacts with NDL1 and dynein.

It is found in the cytoplasm. The protein localises to the cytoskeleton. It localises to the spindle pole. Its function is as follows. Positively regulates the activity of the minus-end directed microtubule motor protein dynein. Plays a central role in positioning the mitotic spindle at the bud neck during cell division. Targets cytoplasmic dynein to microtubule plus ends, thereby promoting dynein-mediated microtubule sliding along the bud cortex and consequently the movement of the mitotic spindle to the bud neck. In Candida glabrata (strain ATCC 2001 / BCRC 20586 / JCM 3761 / NBRC 0622 / NRRL Y-65 / CBS 138) (Yeast), this protein is Nuclear distribution protein PAC1.